Reading from the N-terminus, the 946-residue chain is Atos homolog protein A (946 aa).

Residues 24-32 form a transactivation domain 1 (TAD1) region; that stretch reads ALLITEGRT. Over residues 34–43 the composition is skewed to basic and acidic residues; sequence EHSVKGRTEG. Disordered regions lie at residues 34–58, 246–271, 484–524, and 547–567; these read EHSV…APNK, SVTQ…FTKP, FQSS…TGNQ, and SCTD…SQKV. Polar residues-rich tracts occupy residues 247–267 and 484–500; these read VTQP…SQHA and FQSS…NENI. Composition is skewed to basic and acidic residues over residues 503–517 and 547–560; these read LPEK…HGEI and SCTD…KDNP. Positions 749-806 are required for macropage invasion; that stretch reads LLGNFEESVLNYRFEPLGVVEGFTAEVGASGIFCPTHMTLPVKVSFYSVSDDNAPSPY. Residues 833–841 are transactivation domain 2 (TAD2); the sequence is FNPNKTVVK.

It belongs to the ATOS family.

It is found in the nucleus. Transcription regulator that syncronizes transcriptional and translational programs to promote macrophage invasion of tissues. This Xenopus tropicalis (Western clawed frog) protein is Atos homolog protein A (atosa).